A 408-amino-acid polypeptide reads, in one-letter code: Exo-alpha-sialidase ARB_03431 (408 aa).

The signal sequence occupies residues 1-22 (MGIKQWLLSLVVVAISATATQA). Arg-62, Arg-81, Asp-87, and Gln-150 together coordinate substrate. The N-linked (GlcNAc...) asparagine glycan is linked to Asn-237. Residues Arg-267, Arg-324, 324–325 (RT), 333–334 (YD), Lys-339, Tyr-360, Asp-378, and 378–380 (DWY) contribute to the substrate site. A glycan (N-linked (GlcNAc...) asparagine) is linked at Asn-398.

The protein belongs to the glycosyl hydrolase 33 family.

It is found in the secreted. It carries out the reaction Hydrolysis of alpha-(2-&gt;3)-, alpha-(2-&gt;6)-, alpha-(2-&gt;8)- glycosidic linkages of terminal sialic acid residues in oligosaccharides, glycoproteins, glycolipids, colominic acid and synthetic substrates.. Sialidase is able to release sialic acid from a wide variety of natural substrates. The protein is Exo-alpha-sialidase ARB_03431 of Arthroderma benhamiae (strain ATCC MYA-4681 / CBS 112371) (Trichophyton mentagrophytes).